The chain runs to 332 residues: MAERKKRSSIQTNKPNKKPMKKKPFQLNHLPGLSEDLKTMRKLRFVVNDPYATDYSSSEEEERSQRRKRYVCEIDLPFAQAATQAESESSYCQESNNNGVSKTKISACSKKVLRSKASPVVGRSSTTVSKPVGVRQRKWGKWAAEIRHPITKVRTWLGTYETLEQAADAYATKKLEFDALAAATSAASSVLSNESGSMISASGSSIDLDKKLVDSTLDQQAGESKKASFDFDFADLQIPEMGCFIDDSFIPNACELDFLLTEENNNQMLDDYCGIDDLDIIGLECDGPSELPDYDFSDVEIDLGLIGTTIDKYAFVDHIATTTPTPLNIACP.

Residues 1 to 33 are disordered; sequence MAERKKRSSIQTNKPNKKPMKKKPFQLNHLPGL. Basic residues predominate over residues 15–24; the sequence is PNKKPMKKKP. Residues 130–187 constitute a DNA-binding region (AP2/ERF); that stretch reads KPVGVRQRKWGKWAAEIRHPITKVRTWLGTYETLEQAADAYATKKLEFDALAAATSAA.

Belongs to the AP2/ERF transcription factor family. ERF subfamily.

The protein localises to the nucleus. Its function is as follows. Probably acts as a transcriptional activator. Binds to the GCC-box pathogenesis-related promoter element. May be involved in the regulation of gene expression by stress factors and by components of stress signal transduction pathways. This chain is Ethylene-responsive transcription factor ERF119 (ERF119), found in Arabidopsis thaliana (Mouse-ear cress).